Reading from the N-terminus, the 81-residue chain is Protein PYP1 (81 aa).

The N-terminal 25 residues, 1 to 25 (MAFVSGFTGMPVTARVSKAVCRTRM), are a transit peptide targeting the chloroplast. The disordered stretch occupies residues 27–57 (LEGGKSSGGGEATRDPEPTAVDPNDPKGKQQ).

The protein resides in the plastid. It localises to the chloroplast. This is Protein PYP1 from Pyropia yezoensis (Susabi-nori).